Here is a 66-residue protein sequence, read N- to C-terminus: Surface composition regulator (66 aa).

Belongs to the GlgS family.

Major determinant of cell surface composition. Negatively regulates motility, adhesion and synthesis of biofilm exopolysaccharides. In Shigella dysenteriae serotype 1 (strain Sd197), this protein is Surface composition regulator.